The primary structure comprises 124 residues: Glycine cleavage system H protein (124 aa).

Positions 19 to 101 (TGTVGITDYA…AGKGWFLQIK (83 aa)) constitute a Lipoyl-binding domain. The residue at position 60 (lysine 60) is an N6-lipoyllysine.

This sequence belongs to the GcvH family. As to quaternary structure, the glycine cleavage system is composed of four proteins: P, T, L and H. (R)-lipoate serves as cofactor.

In terms of biological role, the glycine cleavage system catalyzes the degradation of glycine. The H protein shuttles the methylamine group of glycine from the P protein to the T protein. The protein is Glycine cleavage system H protein of Beijerinckia indica subsp. indica (strain ATCC 9039 / DSM 1715 / NCIMB 8712).